Consider the following 196-residue polypeptide: Probable malonic semialdehyde reductase RutE (196 aa).

It belongs to the nitroreductase family. HadB/RutE subfamily. FMN is required as a cofactor.

The catalysed reaction is 3-hydroxypropanoate + NADP(+) = 3-oxopropanoate + NADPH + H(+). Functionally, may reduce toxic product malonic semialdehyde to 3-hydroxypropionic acid, which is excreted. The protein is Probable malonic semialdehyde reductase RutE of Enterobacter sp. (strain 638).